Reading from the N-terminus, the 133-residue chain is Small ribosomal subunit protein uS9 (133 aa).

Residues 97–133 form a disordered region; it reads MKQELKSQGFLTRDPRKKERKKYGRKKARKSFQFSKR. Residues 114–133 show a composition bias toward basic residues; it reads KERKKYGRKKARKSFQFSKR.

This sequence belongs to the universal ribosomal protein uS9 family.

This chain is Small ribosomal subunit protein uS9 (rpsI), found in Chlamydia muridarum (strain MoPn / Nigg).